Consider the following 410-residue polypeptide: Phosphoglycerate kinase (410 aa).

Substrate is bound by residues 22–24 (DIN), arginine 39, 62–65 (HQSR), arginine 119, and arginine 159. ATP-binding positions include glutamate 332 and 358-361 (GGHL).

Belongs to the phosphoglycerate kinase family. Homodimer.

It is found in the cytoplasm. It catalyses the reaction (2R)-3-phosphoglycerate + ATP = (2R)-3-phospho-glyceroyl phosphate + ADP. The protein operates within carbohydrate degradation; glycolysis; pyruvate from D-glyceraldehyde 3-phosphate: step 2/5. This Methanothermus fervidus (strain ATCC 43054 / DSM 2088 / JCM 10308 / V24 S) protein is Phosphoglycerate kinase (pgk).